Here is a 180-residue protein sequence, read N- to C-terminus: Signal peptidase complex subunit 2 (180 aa).

Residues 1–45 (MTDEPVKVVNKWDGPTVKNALDEVVKKILNDKVGWTESHNLMNLR) lie on the Cytoplasmic side of the membrane. A helical transmembrane segment spans residues 46-66 (LLISFIGVAFSAFACGYDYYE). At 67–72 (PFPKSK) the chain is on the lumenal side. The helical transmembrane segment at 73–93 (IVLAVCSVSYFICMGILQMYQ) threads the bilayer. Topologically, residues 94–180 (WYVEKDCIYE…LYNRLIRSEQ (87 aa)) are cytoplasmic.

Belongs to the SPCS2 family. Component of the signal peptidase complex (SPC) composed of a catalytic subunit sec-11 and three accessory subunits spcs-1, spcs-2 and spcs-3. The complex induces a local thinning of the ER membrane which is used to measure the length of the signal peptide (SP) h-region of protein substrates. This ensures the selectivity of the complex towards h-regions shorter than 18-20 amino acids.

Its subcellular location is the endoplasmic reticulum membrane. Component of the signal peptidase complex (SPC) which catalyzes the cleavage of N-terminal signal sequences from nascent proteins as they are translocated into the lumen of the endoplasmic reticulum. Enhances the enzymatic activity of SPC and facilitates the interactions between different components of the translocation site. This is Signal peptidase complex subunit 2 from Caenorhabditis elegans.